We begin with the raw amino-acid sequence, 151 residues long: Lipoprotein signal peptidase (151 aa).

Helical transmembrane passes span 33–53 (VIPDFFHLTYVLNPGAAFGLL), 58–78 (WIFIPAAIIVCAGIIYAQFKI), and 87–107 (LTLGLIGGGALGNLYDRLFIG). Active-site residues include Asp111 and Asp126. Residues 120-140 (FVFNFADSAIVVGVGLLMILM) traverse the membrane as a helical segment.

This sequence belongs to the peptidase A8 family.

The protein resides in the cell membrane. It carries out the reaction Release of signal peptides from bacterial membrane prolipoproteins. Hydrolyzes -Xaa-Yaa-Zaa-|-(S,diacylglyceryl)Cys-, in which Xaa is hydrophobic (preferably Leu), and Yaa (Ala or Ser) and Zaa (Gly or Ala) have small, neutral side chains.. The protein operates within protein modification; lipoprotein biosynthesis (signal peptide cleavage). In terms of biological role, this protein specifically catalyzes the removal of signal peptides from prolipoproteins. In Desulfitobacterium hafniense (strain DSM 10664 / DCB-2), this protein is Lipoprotein signal peptidase.